Reading from the N-terminus, the 97-residue chain is Na(+)/H(+) antiporter subunit F1 (97 aa).

The next 3 helical transmembrane spans lie at 3–23 (HNVIIVIALIIVVISMLAMLI), 35–55 (VVALDAIGLQLMAVIALFSIL), and 60–80 (YMIVVIMMIGILAFLGTAVFS).

This sequence belongs to the CPA3 antiporters (TC 2.A.63) subunit F family. As to quaternary structure, may form a heterooligomeric complex that consists of seven subunits: mnhA1, mnhB1, mnhC1, mnhD1, mnhE1, mnhF1 and mnhG1.

It is found in the cell membrane. Mnh complex is a Na(+)/H(+) antiporter involved in Na(+) excretion. This Staphylococcus aureus (strain Mu3 / ATCC 700698) protein is Na(+)/H(+) antiporter subunit F1 (mnhF1).